The primary structure comprises 299 residues: Ankyrin repeat domain-containing protein 54 (299 aa).

The disordered stretch occupies residues 1–32; the sequence is MAAAAGGADDESRSGRSSSDGECAVAPEPLTG. Ala-2 carries the post-translational modification N-acetylalanine. A phosphoserine mark is found at Ser-57 and Ser-62. The short motif at 98–116 is the Nuclear localization signal (NLS) element; that stretch reads RRLGPTGKEVHALKRLRDS. ANK repeat units lie at residues 108 to 137, 141 to 170, 174 to 203, and 207 to 239; these read HALK…DPCA, KGRT…DPNQ, LGNT…RVDA, and AGRT…EVKQ. The LYN-binding stretch occupies residues 140-240; the sequence is DKGRTALHFA…EAVRLEVKQI (101 aa). The Nuclear export signal (NES) signature appears at 282–292; the sequence is LLASFTSLSLQ.

As to quaternary structure, interacts (via ankyrin repeat region) with LYN (via SH3-domain) in an activation-independent status of LYN. Forms a multiprotein complex with LYN and HCLS1. Interacts with TSN2, VAV1, DBNL and LASP1.

The protein localises to the nucleus. It localises to the cytoplasm. It is found in the midbody. In terms of biological role, plays an important role in regulating intracellular signaling events associated with erythroid terminal differentiation. The sequence is that of Ankyrin repeat domain-containing protein 54 (ANKRD54) from Bos taurus (Bovine).